The primary structure comprises 23 residues: Cytochrome c oxidase subunit 7A1, mitochondrial (23 aa).

This sequence belongs to the cytochrome c oxidase VIIa family. In terms of assembly, component of the complex IV (CIV, cytochrome c oxidase), a multisubunit enzyme composed of 14 subunits. The complex is composed of a catalytic core of 3 subunits MT-CO1, MT-CO2 and MT-CO3, encoded in the mitochondrial DNA, and 11 supernumerary subunits COX4I1 (or COX4I2), COX5A, COX5B, COX6A2 (or COX6A1), COX6B1 (or COX6B2), COX6C, COX7A1 (or COX7A2), COX7B, COX7C, COX8B and NDUFA4, which are encoded in the nuclear genome. The complex exists as a monomer or a dimer and forms supercomplexes (SCs) in the inner mitochondrial membrane with NADH-ubiquinone oxidoreductase (complex I, CI) and ubiquinol-cytochrome c oxidoreductase (cytochrome b-c1 complex, complex III, CIII), resulting in different assemblies (supercomplex SCI(1)III(2)IV(1) and megacomplex MCI(2)III(2)IV(2)).

The protein resides in the mitochondrion inner membrane. It functions in the pathway energy metabolism; oxidative phosphorylation. Functionally, component of the mitochondrial respiratory complex IV (CIV, also named cytochrome c oxidase complex), the last enzyme in the mitochondrial electron transport chain which drives oxidative phosphorylation. The CIV complex is the component of the respiratory chain that catalyzes the reduction of oxygen to water. Acts as an assembly factor that specifically drives the homodimerization of CIV complexes, mediating the formation of mitochondrial respiratory supercomplexes (respirasomes) containing two CIV: supercomplxes with two molecules of CIV show improved activity. Despite being highly expressed in brown adipose tissue, not required for thermogenesis. This Canis lupus familiaris (Dog) protein is Cytochrome c oxidase subunit 7A1, mitochondrial (COX7A1).